Here is a 102-residue protein sequence, read N- to C-terminus: NADH-quinone oxidoreductase subunit K (102 aa).

A run of 3 helical transmembrane segments spans residues 6 to 26 (MEHGLLLAAVLFCIGLCGLLI), 30 to 50 (LLFILMSIEIMMNASALAFVV), and 65 to 85 (ILVISLAAAEASIGLALLLLL).

This sequence belongs to the complex I subunit 4L family. NDH-1 is composed of 14 different subunits. Subunits NuoA, H, J, K, L, M, N constitute the membrane sector of the complex.

Its subcellular location is the cell inner membrane. The catalysed reaction is a quinone + NADH + 5 H(+)(in) = a quinol + NAD(+) + 4 H(+)(out). Its function is as follows. NDH-1 shuttles electrons from NADH, via FMN and iron-sulfur (Fe-S) centers, to quinones in the respiratory chain. The immediate electron acceptor for the enzyme in this species is believed to be ubiquinone. Couples the redox reaction to proton translocation (for every two electrons transferred, four hydrogen ions are translocated across the cytoplasmic membrane), and thus conserves the redox energy in a proton gradient. This is NADH-quinone oxidoreductase subunit K from Aeromonas hydrophila subsp. hydrophila (strain ATCC 7966 / DSM 30187 / BCRC 13018 / CCUG 14551 / JCM 1027 / KCTC 2358 / NCIMB 9240 / NCTC 8049).